The chain runs to 474 residues: 3-isopropylmalate dehydratase large subunit (474 aa).

Positions 355, 415, and 418 each coordinate [4Fe-4S] cluster.

This sequence belongs to the aconitase/IPM isomerase family. LeuC type 1 subfamily. In terms of assembly, heterodimer of LeuC and LeuD. Requires [4Fe-4S] cluster as cofactor.

The catalysed reaction is (2R,3S)-3-isopropylmalate = (2S)-2-isopropylmalate. It participates in amino-acid biosynthesis; L-leucine biosynthesis; L-leucine from 3-methyl-2-oxobutanoate: step 2/4. In terms of biological role, catalyzes the isomerization between 2-isopropylmalate and 3-isopropylmalate, via the formation of 2-isopropylmaleate. The chain is 3-isopropylmalate dehydratase large subunit from Shewanella oneidensis (strain ATCC 700550 / JCM 31522 / CIP 106686 / LMG 19005 / NCIMB 14063 / MR-1).